Consider the following 225-residue polypeptide: Uridylate kinase (225 aa).

Lysine 7–serine 11 is a binding site for ATP. Glycine 44 is a binding site for UMP. Residues glycine 45 and arginine 49 each contribute to the ATP site. UMP is bound by residues aspartate 66 and phenylalanine 114–threonine 120. Residues tyrosine 147 and glutamate 150 each contribute to the ATP site.

The protein belongs to the UMP kinase family. In terms of assembly, homohexamer.

It is found in the cytoplasm. The catalysed reaction is UMP + ATP = UDP + ADP. Its pathway is pyrimidine metabolism; CTP biosynthesis via de novo pathway; UDP from UMP (UMPK route): step 1/1. Inhibited by UTP. Catalyzes the reversible phosphorylation of UMP to UDP. The sequence is that of Uridylate kinase from Aeropyrum pernix (strain ATCC 700893 / DSM 11879 / JCM 9820 / NBRC 100138 / K1).